We begin with the raw amino-acid sequence, 1411 residues long: Early endosome antigen 1 (1411 aa).

A disordered region spans residues 1 to 27 (MFRRILQRTPGRVGSQGSDLDSSATPI). Residues 15–27 (SQGSDLDSSATPI) are compositionally biased toward polar residues. The C2H2-type zinc-finger motif lies at 41-64 (FICPQCMKSLGSADELFKHYQAVH). 2 positions are modified to phosphoserine: Ser52 and Ser70. A coiled-coil region spans residues 78-1348 (LALTRDDITL…IKHTQALNRK (1271 aa)). Disordered regions lie at residues 476 to 501 (STELQHQLEKSKQQHQEQQALQQSAT) and 1189 to 1217 (EKESQQLMREQVKKEEEKRKEEFSEKEAK). Basic and acidic residues predominate over residues 481 to 490 (HQLEKSKQQH). Residues 491 to 500 (QEQQALQQSA) are compositionally biased toward low complexity. Residues 1352-1410 (DNEVQNCMSCGKCFSVTVRRHHCRQCGNIFCAECSTKNALTPSSKKPVRVCDACFNDLQ) form an FYVE-type zinc finger. Cys1358, Cys1361, Cys1374, Cys1377, Cys1382, Cys1385, Cys1402, and Cys1405 together coordinate Zn(2+).

In terms of assembly, homodimer. Binds STX6. Binds RAB5A, RAB5B, RAB5C and RAB22A that have been activated by GTP-binding. Interacts with ERBB2. Interacts with RAB31. Interacts with SAMD9 and SAMD9L. May interact with PLEKHF2.

The protein localises to the cytoplasm. It is found in the early endosome membrane. Functionally, binds phospholipid vesicles containing phosphatidylinositol 3-phosphate and participates in endosomal trafficking. The protein is Early endosome antigen 1 (Eea1) of Mus musculus (Mouse).